The following is a 209-amino-acid chain: PRA1 family protein A1 (209 aa).

A run of 4 helical transmembrane segments spans residues 51–73 (LYYYRTNYFIMIVVILGLGVLTR), 77–99 (IFAALLTALSLAFLNDSFAGSFS), 144–164 (VFVLTCSLVSFALWYISSGLL), and 166–186 (VSVALLIAHLATILHASLRTP).

This sequence belongs to the PRA1 family.

It localises to the endoplasmic reticulum membrane. Functionally, may be involved in both secretory and endocytic intracellular trafficking in the endosomal/prevacuolar compartments. This is PRA1 family protein A1 (PRA1A1) from Arabidopsis thaliana (Mouse-ear cress).